The chain runs to 269 residues: Putative 6-phosphogluconolactonase (269 aa).

The segment at 248 to 269 (DAATGVPDRDSSDSDSPPPFDG) is disordered.

This sequence belongs to the glucosamine/galactosamine-6-phosphate isomerase family. 6-phosphogluconolactonase subfamily.

Its subcellular location is the nucleus. It catalyses the reaction 6-phospho-D-glucono-1,5-lactone + H2O = 6-phospho-D-gluconate + H(+). Its pathway is carbohydrate degradation; pentose phosphate pathway; D-ribulose 5-phosphate from D-glucose 6-phosphate (oxidative stage): step 2/3. Functionally, hydrolysis of 6-phosphogluconolactone to 6-phosphogluconate. This Caenorhabditis elegans protein is Putative 6-phosphogluconolactonase.